Reading from the N-terminus, the 152-residue chain is Transcriptional regulator MraZ (152 aa).

2 consecutive SpoVT-AbrB domains span residues 5 to 52 (ASAI…PADE) and 81 to 124 (AHEI…DEAQ).

The protein belongs to the MraZ family. Forms oligomers.

It is found in the cytoplasm. It localises to the nucleoid. The chain is Transcriptional regulator MraZ from Shewanella amazonensis (strain ATCC BAA-1098 / SB2B).